Reading from the N-terminus, the 125-residue chain is Glucose-1-phosphate adenylyltransferase small subunit (125 aa).

Belongs to the bacterial/plant glucose-1-phosphate adenylyltransferase family. In terms of assembly, heterotetramer. Leaves.

It is found in the plastid. The protein localises to the chloroplast. It localises to the amyloplast. It carries out the reaction alpha-D-glucose 1-phosphate + ATP + H(+) = ADP-alpha-D-glucose + diphosphate. It functions in the pathway glycan biosynthesis; starch biosynthesis. Its activity is regulated as follows. Activated by 3'phosphoglycerate, inhibited by orthophosphate. Allosteric regulation. Functionally, this protein plays a role in synthesis of starch. It catalyzes the synthesis of the activated glycosyl donor, ADP-glucose from Glc-1-P and ATP. This is Glucose-1-phosphate adenylyltransferase small subunit (GLG1) from Zea mays (Maize).